Consider the following 356-residue polypeptide: Histidinol-phosphate aminotransferase (356 aa).

An N6-(pyridoxal phosphate)lysine modification is found at Lys222.

This sequence belongs to the class-II pyridoxal-phosphate-dependent aminotransferase family. Histidinol-phosphate aminotransferase subfamily. Homodimer. Pyridoxal 5'-phosphate is required as a cofactor.

The catalysed reaction is L-histidinol phosphate + 2-oxoglutarate = 3-(imidazol-4-yl)-2-oxopropyl phosphate + L-glutamate. Its pathway is amino-acid biosynthesis; L-histidine biosynthesis; L-histidine from 5-phospho-alpha-D-ribose 1-diphosphate: step 7/9. In Lactiplantibacillus plantarum (strain ATCC BAA-793 / NCIMB 8826 / WCFS1) (Lactobacillus plantarum), this protein is Histidinol-phosphate aminotransferase.